A 415-amino-acid polypeptide reads, in one-letter code: Alpha-N-acetylgalactosaminidase (415 aa).

A signal peptide spans M1–M17. 3 disulfide bridges follow: C38/C80, C42/C49, and C127/C158. Substrate is bound by residues D78 to D79 and K154. The active-site Nucleophile is D156. N177 carries N-linked (GlcNAc...) asparagine glycosylation. C187 and C209 form a disulfide bridge. S188 is a binding site for substrate. The N-linked (GlcNAc...) asparagine glycan is linked to N201. Substrate contacts are provided by R213 and D217. The Proton donor role is filled by D217. A phosphoserine mark is found at S322 and S332. N385 is a glycosylation site (N-linked (GlcNAc...) asparagine).

The protein belongs to the glycosyl hydrolase 27 family. As to quaternary structure, homodimer.

The protein resides in the lysosome. The catalysed reaction is Cleavage of non-reducing alpha-(1-&gt;3)-N-acetylgalactosamine residues from human blood group A and AB mucin glycoproteins, Forssman hapten and blood group A lacto series glycolipids.. It carries out the reaction a neolactoside IV(3)-alpha-GalNAc,IV(2)-alpha-Fuc-nLc4Cer(d18:1(4E)) + H2O = a neolactoside IV(2)-alpha-Fuc-nLc4Cer(d18:1(4E)) + N-acetyl-alpha-D-galactosamine. The enzyme catalyses a neolactoside IV(3)-alpha-GalNAc,IV(2)-alpha-Fuc-nLc4Cer(d18:0) + H2O = a neolactoside IV(2)-alpha-Fuc-nLc4Cer(d18:0) + N-acetyl-alpha-D-galactosamine. It catalyses the reaction a globoside IV3GalNAc-Gb4Cer + H2O = N-acetyl-alpha-D-galactosamine + a globoside Gb4Cer. Its function is as follows. Removes terminal alpha-N-acetylgalactosamine residues from glycolipids and glycopeptides. Required for the breakdown of glycolipids. The polypeptide is Alpha-N-acetylgalactosaminidase (Naga) (Mus musculus (Mouse)).